Here is a 403-residue protein sequence, read N- to C-terminus: Aspartate aminotransferase, cytoplasmic isozyme 2 (403 aa).

At M1 the chain carries N-acetylmethionine. L-aspartate-binding residues include G37, W132, and N185. At K249 the chain carries N6-(pyridoxal phosphate)lysine. R377 is a binding site for L-aspartate.

The protein belongs to the class-I pyridoxal-phosphate-dependent aminotransferase family. Homodimer. Pyridoxal 5'-phosphate serves as cofactor.

The protein localises to the cytoplasm. It carries out the reaction L-aspartate + 2-oxoglutarate = oxaloacetate + L-glutamate. In terms of biological role, important for the metabolism of amino acids and Krebs-cycle related organic acids. In plants, it is involved in nitrogen metabolism and in aspects of carbon and energy metabolism. The protein is Aspartate aminotransferase, cytoplasmic isozyme 2 (ASP4) of Arabidopsis thaliana (Mouse-ear cress).